The sequence spans 464 residues: NADH-quinone oxidoreductase subunit N (464 aa).

A run of 14 helical transmembrane segments spans residues 6 to 26 (FLYIVPEITVLGSALALLVLG), 36 to 56 (SMSLISVAIAAVLACKELIYF), 75 to 95 (CLARAVVAVSGLFAFLLFFFA), 101 to 121 (YEFAVLMLFAFLGTLTLVEAH), 123 to 143 (FLSFYLSFELIGFASYILVCF), 157 to 177 (FFVLGALSSCIMLYGISLVYG), 197 to 217 (LGATFGCALVLVGLLFKLGAV), 231 to 253 (PTVAVVFFTIVTKTAMVLVFAGL), 257 to 279 (VVIPITGFVWSMLLMAALSMVVG), 293 to 313 (FAYANIGHIGYVLAGMSTGVV), 317 to 337 (PVLFYVVTYLLINVWIFTVLL), 360 to 380 (AFTFVAALLASAGLPPFSGFF), 395 to 415 (FGVPTLVCVVFLCLTSIIPCF), and 439 to 459 (NVGLSIMAFVAVTLSLVVVLL).

Belongs to the complex I subunit 2 family. NDH-1 is composed of 14 different subunits. Subunits NuoA, H, J, K, L, M, N constitute the membrane sector of the complex.

It is found in the cell inner membrane. It catalyses the reaction a quinone + NADH + 5 H(+)(in) = a quinol + NAD(+) + 4 H(+)(out). In terms of biological role, NDH-1 shuttles electrons from NADH, via FMN and iron-sulfur (Fe-S) centers, to quinones in the respiratory chain. The immediate electron acceptor for the enzyme in this species is believed to be ubiquinone. Couples the redox reaction to proton translocation (for every two electrons transferred, four hydrogen ions are translocated across the cytoplasmic membrane), and thus conserves the redox energy in a proton gradient. The protein is NADH-quinone oxidoreductase subunit N of Anaplasma phagocytophilum (strain HZ).